Consider the following 200-residue polypeptide: NADH-quinone oxidoreductase subunit C (200 aa).

This sequence belongs to the complex I 30 kDa subunit family. In terms of assembly, NDH-1 is composed of 14 different subunits. Subunits NuoB, C, D, E, F, and G constitute the peripheral sector of the complex.

It localises to the cell inner membrane. It catalyses the reaction a quinone + NADH + 5 H(+)(in) = a quinol + NAD(+) + 4 H(+)(out). Functionally, NDH-1 shuttles electrons from NADH, via FMN and iron-sulfur (Fe-S) centers, to quinones in the respiratory chain. The immediate electron acceptor for the enzyme in this species is believed to be ubiquinone. Couples the redox reaction to proton translocation (for every two electrons transferred, four hydrogen ions are translocated across the cytoplasmic membrane), and thus conserves the redox energy in a proton gradient. The protein is NADH-quinone oxidoreductase subunit C of Burkholderia ambifaria (strain ATCC BAA-244 / DSM 16087 / CCUG 44356 / LMG 19182 / AMMD) (Burkholderia cepacia (strain AMMD)).